A 580-amino-acid chain; its full sequence is Putative ankyrin repeat protein L63 (580 aa).

ANK repeat units lie at residues Ser-81–Ile-110, Asp-111–Ala-140, Asn-141–Ala-170, Asn-172–Ala-200, Asp-202–Lys-230, Ser-314–Ala-339, Ser-340–Cys-369, Gly-370–Ser-399, Gly-400–Ala-429, Asn-431–Ala-459, Asp-461–Ala-489, Gly-490–Ala-519, Asp-521–Ala-549, and Asn-551–Pro-579.

This chain is Putative ankyrin repeat protein L63, found in Acanthamoeba polyphaga (Amoeba).